The following is a 305-amino-acid chain: Protein FdhE homolog (305 aa).

It belongs to the FdhE family.

The protein localises to the cytoplasm. Its function is as follows. Necessary for formate dehydrogenase activity. The polypeptide is Protein FdhE homolog (Actinobacillus pleuropneumoniae serotype 7 (strain AP76)).